Reading from the N-terminus, the 158-residue chain is Low molecular weight phosphotyrosine protein phosphatase (158 aa).

Position 2 is an N-acetylalanine (A2). Residue C13 is the Nucleophile of the active site. The active site involves R19. D130 functions as the Proton donor in the catalytic mechanism. Residues Y132 and Y133 each carry the phosphotyrosine modification.

The protein belongs to the low molecular weight phosphotyrosine protein phosphatase family. In terms of assembly, interacts with EPHA2; dephosphorylates EPHA2. Interacts with EPHB1. Interacts with the SH3 domain of SPTAN1. There is no interaction observed for isoforms 2 or 3. In terms of processing, phosphorylated by LCK. Phosphorylation at Tyr-132 increases its phosphatase activity. Not phosphorylated. In terms of tissue distribution, expressed in T-lymphocytes.

The protein localises to the cytoplasm. It carries out the reaction O-phospho-L-tyrosyl-[protein] + H2O = L-tyrosyl-[protein] + phosphate. It catalyses the reaction a phosphate monoester + H2O = an alcohol + phosphate. Inhibited by sulfhydryl reagents. In terms of biological role, acts on tyrosine phosphorylated proteins, low-MW aryl phosphates and natural and synthetic acyl phosphates with differences in substrate specificity between isoform 1 and isoform 2. Functionally, does not possess phosphatase activity. The protein is Low molecular weight phosphotyrosine protein phosphatase of Homo sapiens (Human).